The primary structure comprises 883 residues: Serine/threonine-protein kinase greatwall (883 aa).

Residue Met1 is modified to N-acetylmethionine. Positions 35-839 (FTIVKPISRG…IKELKCHPLF (805 aa)) constitute a Protein kinase domain. ATP contacts are provided by residues 41 to 49 (ISRGAFGKV) and Lys62. Asp156 acts as the Proton acceptor in catalysis. Residues Thr209 and Thr224 each carry the phosphothreonine modification. 3 positions are modified to phosphoserine: Ser295, Ser373, and Ser456. Position 523 is a phosphothreonine (Thr523). 5 positions are modified to phosphoserine: Ser555, Ser559, Ser634, Ser661, and Ser672. Phosphothreonine is present on Thr726. A Phosphoserine modification is found at Ser729. Thr745 is modified (phosphothreonine; by CDK1). Residues 840–883 (SDVDWENLQHQTMPFIPQPDDETDTSYFEARNNAQHLTVSGFSL) form the AGC-kinase C-terminal domain. Phosphoserine occurs at positions 879 and 882.

It belongs to the protein kinase superfamily. AGC Ser/Thr protein kinase family. In terms of processing, phosphorylation at Thr-745 by CDK1 during M phase activates its kinase activity. Maximum phosphorylation occurs in prometaphase.

The protein localises to the cytoplasm. Its subcellular location is the cytoskeleton. It is found in the microtubule organizing center. The protein resides in the centrosome. It localises to the nucleus. The enzyme catalyses L-seryl-[protein] + ATP = O-phospho-L-seryl-[protein] + ADP + H(+). It catalyses the reaction L-threonyl-[protein] + ATP = O-phospho-L-threonyl-[protein] + ADP + H(+). Functionally, serine/threonine kinase that plays a key role in M phase by acting as a regulator of mitosis entry and maintenance. Acts by promoting the inactivation of protein phosphatase 2A (PP2A) during M phase: does not directly inhibit PP2A but acts by mediating phosphorylation and subsequent activation of ARPP19 and ENSA at 'Ser-62' and 'Ser-67', respectively. ARPP19 and ENSA are phosphatase inhibitors that specifically inhibit the PPP2R2D (PR55-delta) subunit of PP2A. Inactivation of PP2A during M phase is essential to keep cyclin-B1-CDK1 activity high. Following DNA damage, it is also involved in checkpoint recovery by being inhibited. The sequence is that of Serine/threonine-protein kinase greatwall (MASTL) from Canis lupus familiaris (Dog).